The sequence spans 464 residues: Asparagine--tRNA ligase (464 aa).

This sequence belongs to the class-II aminoacyl-tRNA synthetase family. Homodimer.

The protein resides in the cytoplasm. The catalysed reaction is tRNA(Asn) + L-asparagine + ATP = L-asparaginyl-tRNA(Asn) + AMP + diphosphate + H(+). The protein is Asparagine--tRNA ligase of Xanthomonas euvesicatoria pv. vesicatoria (strain 85-10) (Xanthomonas campestris pv. vesicatoria).